The primary structure comprises 505 residues: Maturase K (505 aa).

The protein belongs to the intron maturase 2 family. MatK subfamily.

It is found in the plastid. It localises to the chloroplast. Its function is as follows. Usually encoded in the trnK tRNA gene intron. Probably assists in splicing its own and other chloroplast group II introns. The sequence is that of Maturase K from Phaulothamnus spinescens (Snake-eyes).